Consider the following 603-residue polypeptide: D-3-phosphoglycerate dehydrogenase 1, chloroplastic (603 aa).

Residues Met1–Cys54 constitute a chloroplast transit peptide. Residues Lys210–Val211, Asp230, Val289–Arg291, and Asp315 each bind NAD(+). Residue Arg291 is part of the active site. Glu320 is an active-site residue. His339 acts as the Proton donor in catalysis. His339–Ala342 is a binding site for NAD(+). The region spanning Ile531–Leu603 is the ACT domain.

It belongs to the D-isomer specific 2-hydroxyacid dehydrogenase family. In terms of tissue distribution, ubiquitous, but highly expressed in roots. Expressed in vasculature, root and shoot meristems, distal part of cotyledons and leaves, anther, stigma and pollen grains. Detected at the tip of the cotyledons in late embryos.

The protein localises to the plastid. It localises to the chloroplast. It carries out the reaction (2R)-3-phosphoglycerate + NAD(+) = 3-phosphooxypyruvate + NADH + H(+). The protein operates within amino-acid biosynthesis; L-serine biosynthesis; L-serine from 3-phospho-D-glycerate: step 1/3. With respect to regulation, partially inhibited by 5 mM serine. Involved in the plastidial phosphorylated pathway of serine biosynthesis (PPSB). Required for mature pollen development. In Arabidopsis thaliana (Mouse-ear cress), this protein is D-3-phosphoglycerate dehydrogenase 1, chloroplastic (PGDH1).